We begin with the raw amino-acid sequence, 89 residues long: Dolichol-phosphate mannose synthase subunit 3 (89 aa).

2 helical membrane passes run 7 to 27 (ILSLLVAISAFWIGLLQAAII) and 33 to 53 (WLLPIYFVVSLGCYGLLMVGV).

The protein belongs to the DPM3 family. In terms of assembly, component of the dolichol-phosphate mannose (DPM) synthase complex composed of DPMS1, DPMS2 and DPMS3; in the complex interacts directly with DPMS1 and DPMS2.

Its subcellular location is the endoplasmic reticulum membrane. It participates in protein modification; protein glycosylation. In terms of biological role, regulates the biosynthesis of dolichol phosphate-mannose. Regulatory subunit of the dolichol-phosphate mannose (DPM) synthase complex; essential for the ER localization and stable expression of DPMS1. The sequence is that of Dolichol-phosphate mannose synthase subunit 3 from Arabidopsis thaliana (Mouse-ear cress).